Here is a 592-residue protein sequence, read N- to C-terminus: Ferric-chelate reductase 1 (592 aa).

Residues 2-22 (AVSGFTLGTCILLLHISYVAN) form a helical membrane-spanning segment. A Reelin domain is found at 13–179 (LLLHISYVAN…FTTPKATVVP (167 aa)). 3 N-linked (GlcNAc...) asparagine glycosylation sites follow: Asn-138, Asn-308, and Asn-321. Residues 216-331 (EASCVFLSFT…TSYYIFLADG (116 aa)) enclose the DOMON domain. Positions 335-534 (DGRIYKHSQQ…VGTEVVLEVH (200 aa)) constitute a Cytochrome b561 domain. Residues 372 to 392 (VHGALMFVAWMTTVSIGVLVA) traverse the membrane as a helical segment. 2 residues coordinate heme b: His-373 and His-414. The next 2 helical transmembrane spans lie at 415-435 (RMLM…PFIY) and 446-466 (HPYL…LAVF). The heme b site is built by His-446 and His-482. The next 3 membrane-spanning stretches (helical) occupy residues 491–511 (IIAV…LPDS), 515–535 (YAMT…EVHA), and 569–589 (AVLA…LSAI).

It belongs to the FRRS1 family. Heme b serves as cofactor.

The protein localises to the membrane. Functionally, ferric-chelate reductases reduce Fe(3+) to Fe(2+) before its transport from the endosome to the cytoplasm. In Homo sapiens (Human), this protein is Ferric-chelate reductase 1 (FRRS1).